Here is a 98-residue protein sequence, read N- to C-terminus: Protein S100-A13 (98 aa).

One can recognise an EF-hand domain in the interval 18–53 (TTFFTFARQEGRKDSLSVNEFKELVTQQLPHLLKDV). Serine 32, glutamate 37, aspartate 64, asparagine 66, aspartate 68, glutamate 70, and glutamate 75 together coordinate Ca(2+). The residue at position 32 (serine 32) is a Phosphoserine.

This sequence belongs to the S-100 family. Homodimer. Part of a copper-dependent multiprotein complex containing S100A13, FGF1 and SYT1. Interacts with FGF1 and SYT1. Interacts with IL1A. In terms of tissue distribution, expressed in heart and skeletal muscle.

It localises to the cytoplasm. Its subcellular location is the secreted. Functionally, plays a role in the export of proteins that lack a signal peptide and are secreted by an alternative pathway. Binds two calcium ions per subunit. Binds one copper ion. Binding of one copper ion does not interfere with calcium binding. Required for the copper-dependent stress-induced export of IL1A and FGF1. The calcium-free protein binds to lipid vesicles containing phosphatidylserine, but not to vesicles containing phosphatidylcholine. This is Protein S100-A13 (S100A13) from Homo sapiens (Human).